Consider the following 464-residue polypeptide: Chromosomal replication initiator protein DnaA (464 aa).

Residues 1–82 (MSLSLWQQCL…LLRFEVGSKP (82 aa)) form a domain I, interacts with DnaA modulators region. The interval 82 to 127 (PPQMAVLQPASQHASEAPSQAAVARPRPSRPSWDNAPVQPELSYRS) is domain II. Residues 91–118 (ASQHASEAPSQAAVARPRPSRPSWDNAP) form a disordered region. The domain III, AAA+ region stretch occupies residues 128–344 (NVNPKHNFDN…GALNRVIANA (217 aa)). ATP contacts are provided by glycine 172, glycine 174, lysine 175, and threonine 176. Residues 345-464 (NFTGRAITID…FSNLIRTLSS (120 aa)) are domain IV, binds dsDNA.

It belongs to the DnaA family. As to quaternary structure, oligomerizes as a right-handed, spiral filament on DNA at oriC.

The protein localises to the cytoplasm. Its function is as follows. Plays an essential role in the initiation and regulation of chromosomal replication. ATP-DnaA binds to the origin of replication (oriC) to initiate formation of the DNA replication initiation complex once per cell cycle. Binds the DnaA box (a 9 base pair repeat at the origin) and separates the double-stranded (ds)DNA. Forms a right-handed helical filament on oriC DNA; dsDNA binds to the exterior of the filament while single-stranded (ss)DNA is stabiized in the filament's interior. The ATP-DnaA-oriC complex binds and stabilizes one strand of the AT-rich DNA unwinding element (DUE), permitting loading of DNA polymerase. After initiation quickly degrades to an ADP-DnaA complex that is not apt for DNA replication. Binds acidic phospholipids. This chain is Chromosomal replication initiator protein DnaA, found in Sodalis glossinidius (strain morsitans).